The sequence spans 887 residues: Transportin-2 (887 aa).

20 HEAT repeats span residues 9-36 (GLQQVLQLLKDSQSPNTATQRIVQDKLK), 41-79 (FPDFNNYLIFVLTRLKSEDEPTRSLSGLILKNNVKAHYQ), 88-121 (FIKQECLNNIGDASSLIRATIGILITTIASKGEL), 127-164 (LLPQLCNLLNSEDYNTCEGAFGALQKICEDSSELLDSD), 171-201 (NIMIPKFLQFFKHCSPKIRSHAIACVNQFIM), 214-241 (FIEHLFALAVDDDPEVRKNVCRALVMLL), 253-280 (HSIIQYMLQRTQDHDENVALEACEFWLT), 296-386 (VQLI…LANV), 394-422 (HLLPLLKGLLFHPEWVVKESGILVLGAIA), 434-461 (PELIPHLIQCLSDKKALVRSIACWTLSR), 475-508 (LKPLMTELLKRILDGNKRVQEAACSAFATLEEEA), 516-549 (LSYILDTLVFAFGKYQHKNLLILYDAIGTLADSV), 557-595 (EYIQKLMPPLIQKWNELKDEDKDLFPLLECLSSVATALQ), 603-654 (EPVY…GLGG), 665-696 (IMTLLFQCMQDSMPEVRQSSFALLGDLTKACF), 704-737 (AEFMPILGTNLNPEFISVCNNATWAIGEICMQMG), 745-780 (QMVLNNLVEIINRPNTPKTLLENTAITIGRLGYVCP), 788-821 (QQFIRPWCTSLRNIRDNEEKDSAFRGICMMIGVN), 830-861 (IFFCDAVASWVSPKDDLRDMFYKILHGFKDQV), and 864-884 (ENWQQFSEQFPPLLKERLAAF). Residues 31-99 (VQDKLKQLNQ…KQECLNNIGD (69 aa)) form the Importin N-terminal domain. The interval 344-363 (TLTHEAERPDSSEDAEDDDD) is disordered. Lys852 is subject to N6-acetyllysine.

Belongs to the importin beta family. Importin beta-2 subfamily.

The protein localises to the cytoplasm. It is found in the nucleus. Probably functions in nuclear protein import as nuclear transport receptor. Serves as receptor for nuclear localization signals (NLS) in cargo substrates. Is thought to mediate docking of the importin/substrate complex to the nuclear pore complex (NPC) through binding to nucleoporin and the complex is subsequently translocated through the pore by an energy requiring, Ran-dependent mechanism. At the nucleoplasmic side of the NPC, Ran binds to the importin, the importin/substrate complex dissociates and importin is re-exported from the nucleus to the cytoplasm where GTP hydrolysis releases Ran. The directionality of nuclear import is thought to be conferred by an asymmetric distribution of the GTP- and GDP-bound forms of Ran between the cytoplasm and nucleus. The polypeptide is Transportin-2 (Tnpo2) (Mus musculus (Mouse)).